The primary structure comprises 117 residues: MDKHTTRLRRARKTRARIADLKMVRLCVFRSNNHIYAQVISAEGDKVLAQASTLEAEVRGSLKSGSNVEAAAIVGKRIAEKAKAAGVEKVAFDRSGFQYHGRVKALAEAARENGLSF.

The protein belongs to the universal ribosomal protein uL18 family. In terms of assembly, part of the 50S ribosomal subunit; part of the 5S rRNA/L5/L18/L25 subcomplex. Contacts the 5S and 23S rRNAs.

Its function is as follows. This is one of the proteins that bind and probably mediate the attachment of the 5S RNA into the large ribosomal subunit, where it forms part of the central protuberance. The polypeptide is Large ribosomal subunit protein uL18 (Neisseria gonorrhoeae (strain ATCC 700825 / FA 1090)).